Reading from the N-terminus, the 409-residue chain is 4-hydroxy-3-methylbut-2-en-1-yl diphosphate synthase (ferredoxin) (409 aa).

Polar residues predominate over residues 1–12 (MQTLDRPNAPTQ). The disordered stretch occupies residues 1–22 (MQTLDRPNAPTQQPYPEPVYPR). Residues Cys-314, Cys-317, Cys-348, and Glu-355 each contribute to the [4Fe-4S] cluster site.

This sequence belongs to the IspG family. The cofactor is [4Fe-4S] cluster.

It carries out the reaction (2E)-4-hydroxy-3-methylbut-2-enyl diphosphate + 2 oxidized [2Fe-2S]-[ferredoxin] + H2O = 2-C-methyl-D-erythritol 2,4-cyclic diphosphate + 2 reduced [2Fe-2S]-[ferredoxin] + H(+). Its pathway is isoprenoid biosynthesis; isopentenyl diphosphate biosynthesis via DXP pathway; isopentenyl diphosphate from 1-deoxy-D-xylulose 5-phosphate: step 5/6. In terms of biological role, converts 2C-methyl-D-erythritol 2,4-cyclodiphosphate (ME-2,4cPP) into 1-hydroxy-2-methyl-2-(E)-butenyl 4-diphosphate. The chain is 4-hydroxy-3-methylbut-2-en-1-yl diphosphate synthase (ferredoxin) from Synechococcus sp. (strain JA-2-3B'a(2-13)) (Cyanobacteria bacterium Yellowstone B-Prime).